A 365-amino-acid polypeptide reads, in one-letter code: DNA polymerase IV 1 (365 aa).

A UmuC domain is found at 6 to 196 (VLHIDMDYFF…LNVSKLWGIG (191 aa)). Mg(2+)-binding residues include D10 and D113. The active site involves E114.

It belongs to the DNA polymerase type-Y family. As to quaternary structure, monomer. Mg(2+) serves as cofactor.

Its subcellular location is the cytoplasm. The catalysed reaction is DNA(n) + a 2'-deoxyribonucleoside 5'-triphosphate = DNA(n+1) + diphosphate. Its function is as follows. Poorly processive, error-prone DNA polymerase involved in untargeted mutagenesis. Copies undamaged DNA at stalled replication forks, which arise in vivo from mismatched or misaligned primer ends. These misaligned primers can be extended by PolIV. Exhibits no 3'-5' exonuclease (proofreading) activity. May be involved in translesional synthesis. This is DNA polymerase IV 1 (dbh1) from Methanosarcina mazei (strain ATCC BAA-159 / DSM 3647 / Goe1 / Go1 / JCM 11833 / OCM 88) (Methanosarcina frisia).